Here is a 451-residue protein sequence, read N- to C-terminus: Gamma-aminobutyric acid receptor subunit alpha-2 (451 aa).

Residues 1-28 form the signal peptide; that stretch reads MKTKLNIYNMQLLLFVFLVWDPARLVLA. Over 29-249 the chain is Extracellular; it reads NIQEDEAKNN…MTAHFHLKRK (221 aa). Asn38 is a glycosylation site (N-linked (GlcNAc...) asparagine). Arg94 lines the 4-aminobutanoate pocket. Asn138 carries an N-linked (GlcNAc...) asparagine glycan. Thr157 is a binding site for 4-aminobutanoate. The cysteines at positions 166 and 180 are disulfide-linked. The helical transmembrane segment at 250-270 threads the bilayer; the sequence is IGYFVIQTYLPCIMTVILSQV. Residues 271-280 lie on the Cytoplasmic side of the membrane; that stretch reads SFWLNRESVP. A helical membrane pass occupies residues 281 to 300; that stretch reads ARTVFGVTTVLTMTTLSISA. Residues 301–311 lie on the Extracellular side of the membrane; the sequence is RNSLPKVAYAT. A helical membrane pass occupies residues 312 to 332; it reads AMDWFIAVCYAFVFSALIEFA. Residues 333–420 are Cytoplasmic-facing; that stretch reads TVNYFTKRGW…FNSVSKIDRM (88 aa). A helical membrane pass occupies residues 421–441; the sequence is SRIVFPVLFGTFNLVYWATYL. Residues 442 to 451 are Extracellular-facing; the sequence is NREPVLGVSP.

Belongs to the ligand-gated ion channel (TC 1.A.9) family. Gamma-aminobutyric acid receptor (TC 1.A.9.5) subfamily. GABRA2 sub-subfamily. In terms of assembly, heteropentamer, formed by a combination of alpha (GABRA1-6), beta (GABRB1-3), gamma (GABRG1-3), delta (GABRD), epsilon (GABRE), rho (GABRR1-3), pi (GABRP) and theta (GABRQ) subunits, each subunit exhibiting distinct physiological and pharmacological properties. Interacts with UBQLN1. Interacts with KIF21B. Interacts with LHFPL4. Interacts with SHISA7; interaction leads to the regulation of GABA(A) receptor trafficking, channel deactivation kinetics and pharmacology. Glycosylated.

Its subcellular location is the postsynaptic cell membrane. It localises to the cell membrane. The protein localises to the cytoplasmic vesicle membrane. It is found in the cell projection. The protein resides in the dendrite. The catalysed reaction is chloride(in) = chloride(out). With respect to regulation, activated by pentobarbital. Inhibited by the antagonist bicuculline. Functionally, alpha subunit of the heteropentameric ligand-gated chloride channel gated by gamma-aminobutyric acid (GABA), a major inhibitory neurotransmitter in the brain. GABA-gated chloride channels, also named GABA(A) receptors (GABAAR), consist of five subunits arranged around a central pore and contain GABA active binding site(s) located at the alpha and beta subunit interface(s). When activated by GABA, GABAARs selectively allow the flow of chloride anions across the cell membrane down their electrochemical gradient. Chloride influx into the postsynaptic neuron following GABAAR opening decreases the neuron ability to generate a new action potential, thereby reducing nerve transmission. The alpha-2 subunit exhibits synaptogenic activity together with beta-2 and very little to no activity together with beta-3, the gamma-2 subunit being necessary but not sufficient to induce rapid synaptic contacts formation. This chain is Gamma-aminobutyric acid receptor subunit alpha-2 (GABRA2), found in Pongo abelii (Sumatran orangutan).